The following is a 147-amino-acid chain: MSDESNPPKVILLVEDSKADSRLVQEVLKTSTIDHELIILRDGLAAMAFLQQQGEYENSPRPNLILLDLNLPKKDGREVLAEIKQNPDLKRIPVVVLTTSHNEDDVIASYELHVNCYLTKSRNLKDLFKMVQGIESFWLETVTLPAA.

Residues 10-135 (VILLVEDSKA…DLFKMVQGIE (126 aa)) enclose the Response regulatory domain. Residue Asp-68 is modified to 4-aspartylphosphate.

Post-translationally, phosphorylated by Cph1.

In terms of biological role, forms a two-component system with Cph1 in which it acts as receiver substrate. In Synechocystis sp. (strain ATCC 27184 / PCC 6803 / Kazusa), this protein is Response regulator Rcp1 (rcp1).